Here is a 255-residue protein sequence, read N- to C-terminus: MWIGIISLFPEMFRAITDYGVTGRAVKNGLLSIQSWSPRDFTHDRHRTVDDRPYGGGPGMLMMVQPLRDAIHAAKAAAGEGAKVIYLSPQGRKLDQAGVSELATNQKLILVCGRYEGIDERVIQTEIDEEWSIGDYVLSGGELPAMTLIDSVSRFIPGVLGHEASATEDSFAEGLLDCPHYTRPEVLEGMEVPPVLLSGNHAEIRRWRLKQSLGRTWLRRPELLENLALTEEQARLLAEFKTEHAQQQHKHDGMA.

S-adenosyl-L-methionine contacts are provided by residues glycine 113 and 133 to 138; that span reads IGDYVL.

This sequence belongs to the RNA methyltransferase TrmD family. In terms of assembly, homodimer.

It localises to the cytoplasm. It catalyses the reaction guanosine(37) in tRNA + S-adenosyl-L-methionine = N(1)-methylguanosine(37) in tRNA + S-adenosyl-L-homocysteine + H(+). Its function is as follows. Specifically methylates guanosine-37 in various tRNAs. The polypeptide is tRNA (guanine-N(1)-)-methyltransferase (Escherichia coli O6:K15:H31 (strain 536 / UPEC)).